Reading from the N-terminus, the 287-residue chain is MKRIFLLIATNLAVLLVASIVMSILGVNTSTMGGLLVFAAIFGFGGAFISLAISKWMAKKTMGCEVITTPRDSTERWLLDTVARQAQQAGIKMPEVAIYQSPEMNAFATGPSKDNSLVAVSTGLLYGMSQDEVEGVLAHEVSHVANGDMVTLTLIQGVVNTFVIFAARVVAGIINNFVSSNDEEGEGLGMFAYMAVVFVLDMLFGILASIIVAYFSRIREYRADEGAARLAGKHKMIAALERLRQGPESSAMPAQMSAFGINGKRSMAELMMSHPPLEKRIAALQTR.

2 helical membrane passes run 4-24 and 33-53; these read IFLL…VMSI and GGLL…SLAI. A Zn(2+)-binding site is contributed by His139. Residue Glu140 is part of the active site. His143 is a binding site for Zn(2+). 2 helical membrane-spanning segments follow: residues 154 to 174 and 195 to 215; these read LIQG…AGII and AVVF…VAYF. Glu220 contacts Zn(2+).

Belongs to the peptidase M48B family. It depends on Zn(2+) as a cofactor.

The protein localises to the cell inner membrane. In Shewanella sp. (strain ANA-3), this protein is Protease HtpX.